The primary structure comprises 490 residues: ABC transporter ATP-binding protein ModF (490 aa).

ABC transporter domains follow at residues 4–235 (LQIL…AHSE) and 261–489 (IVLN…LTKI). ATP is bound by residues 36–43 (GSNGSGKS) and 293–300 (GPNGAGKS).

This sequence belongs to the ABC transporter superfamily.

The protein localises to the cell inner membrane. Functionally, probably not involved in the transport of molybdenum into the cell. The chain is ABC transporter ATP-binding protein ModF (modF) from Escherichia coli (strain K12).